A 207-amino-acid chain; its full sequence is Ras-related protein Rab-7a (207 aa).

The residue at position 2 (Thr-2) is an N-acetylthreonine. Residues Ser-17, Gly-18, Val-19, Gly-20, Lys-21, Thr-22, Ser-23, Ser-34, Asn-35, Tyr-37, and Thr-40 each coordinate GTP. Thr-22 lines the Mg(2+) pocket. Residues 28-41 (YVNKKFSNQYKATI) carry the Switch 1 motif. The Mg(2+) site is built by Thr-40 and Asp-63. Gly-66 contacts GTP. The Switch 2 signature appears at 67-82 (QERFQSLGVAFYRGAD). Ser-72 is subject to Phosphoserine. GTP contacts are provided by Asn-125, Lys-126, Asp-128, Ala-156, and Lys-157. Glycyl lysine isopeptide (Lys-Gly) (interchain with G-Cter in ubiquitin) cross-links involve residues Lys-191 and Lys-194. Residues Cys-205 and Cys-207 are each lipidated (S-geranylgeranyl cysteine). Cys-207 is modified (cysteine methyl ester).

The protein belongs to the small GTPase superfamily. Rab family. As to quaternary structure, interacts with NTRK1/TRKA, RILP, PSMA7, RNF115 and FYCO1. Interacts with the PIK3C3/VPS34-PIK3R4 complex. The GTP-bound form interacts with OSBPL1A and RAC1. Interacts with CLN3. Interacts with CHM, the substrate-binding subunit of the Rab geranylgeranyltransferase complex. Interacts with C9orf72. Does not interact with HPS4 and the BLOC-3 complex (heterodimer of HPS1 and HPS4). Interacts with CLN5. Interacts with PLEKHM1 (via N- and C-terminus). Interacts with PRPH; the interaction is direct. Interacts with VPS13A. The GDP-bound form interacts with RIMOC1. Interacts with the MON1A-CCZ1B complex and this interaction is enhanced in the presence of RIMOC1. Interacts with VPS39 and VPS41. Forms a ternary complex with LAMP2 and RUFY4; the interaction with LAMP2 is mediated by RUFY4 (via RUN and coiled coil domains). The cofactor is Mg(2+). Post-translationally, deubiquitination at Lys-191 and Lys-194 by USP32. Phosphorylated at Ser-72 by LRRK1; phosphorylation is dependent on protein kinase C (PKC) activation of LRRK1. In terms of processing, prenylated. Prenylation is required for association with cellular membranes. Widely expressed. High expression in liver, heart and kidney. Found in sensory and motor neurons.

It localises to the cytoplasmic vesicle. Its subcellular location is the phagosome membrane. The protein resides in the late endosome membrane. It is found in the lysosome membrane. The protein localises to the melanosome membrane. It localises to the autophagosome membrane. Its subcellular location is the lipid droplet. The protein resides in the endosome membrane. It is found in the mitochondrion membrane. It carries out the reaction GTP + H2O = GDP + phosphate + H(+). Regulated by guanine nucleotide exchange factors (GEFs) which promote the exchange of bound GDP for free GTP. Regulated by GTPase activating proteins (GAPs) which increase the GTP hydrolysis activity. Inhibited by GDP dissociation inhibitors (GDIs). In terms of biological role, the small GTPases Rab are key regulators of intracellular membrane trafficking, from the formation of transport vesicles to their fusion with membranes. Rabs cycle between an inactive GDP-bound form and an active GTP-bound form that is able to recruit to membranes different sets of downstream effectors directly responsible for vesicle formation, movement, tethering and fusion. In its active state, RAB7A binds to a variety of effector proteins playing a key role in the regulation of endo-lysosomal trafficking. Governs early-to-late endosomal maturation, microtubule minus-end as well as plus-end directed endosomal migration and positioning, and endosome-lysosome transport through different protein-protein interaction cascades. Also plays a central role in growth-factor-mediated cell signaling, nutrient-transporter-mediated nutrient uptake, neurotrophin transport in the axons of neurons and lipid metabolism. Also involved in regulation of some specialized endosomal membrane trafficking, such as maturation of melanosomes, pathogen-induced phagosomes (or vacuoles) and autophagosomes. Plays a role in the maturation and acidification of phagosomes that engulf pathogens, such as S.aureus and Mycobacteria. Plays a role in the fusion of phagosomes with lysosomes. In concert with RAC1, plays a role in regulating the formation of RBs (ruffled borders) in osteoclasts. Controls the endosomal trafficking and neurite outgrowth signaling of NTRK1/TRKA. Regulates the endocytic trafficking of the EGF-EGFR complex by regulating its lysosomal degradation. Involved in the ADRB2-stimulated lipolysis through lipophagy, a cytosolic lipase-independent autophagic pathway. Required for the exosomal release of SDCBP, CD63 and syndecan. Required for vesicular trafficking and cell surface expression of ACE2. May play a role in PRPH neuronal intermediate filament assembly. In Mus musculus (Mouse), this protein is Ras-related protein Rab-7a.